The primary structure comprises 257 residues: Snake venom serine protease 2C (257 aa).

The N-terminal stretch at Met1–Ala18 is a signal peptide. A propeptide spanning residues Gln19–Leu24 is cleaved from the precursor. Residues Val25 to Ala248 enclose the Peptidase S1 domain. Cystine bridges form between Cys31–Cys162, Cys49–Cys65, Cys97–Cys255, Cys141–Cys209, Cys173–Cys188, and Cys199–Cys224. Active-site charge relay system residues include His64 and Asp109. Residues Asn116, Asn120, and Asn121 are each glycosylated (N-linked (GlcNAc...) asparagine). The Charge relay system role is filled by Ser203.

This sequence belongs to the peptidase S1 family. Snake venom subfamily. As to quaternary structure, monomer. As to expression, expressed by the venom gland.

The protein localises to the secreted. Snake venom serine protease that may act in the hemostasis system of the prey. In Craspedocephalus gramineus (Bamboo pit viper), this protein is Snake venom serine protease 2C (TLG2C).